We begin with the raw amino-acid sequence, 532 residues long: Putative 57 kDa heat shock protein (532 aa).

SHSP domains lie at 25 to 134 (VNGP…CKIT) and 439 to 532 (SVLE…IPSN).

This sequence belongs to the small heat shock protein (HSP20) family.

This Arabidopsis thaliana (Mouse-ear cress) protein is Putative 57 kDa heat shock protein.